The chain runs to 159 residues: MISSSKRDELIVSKIRKGTVIDHIPAGRALAVLRILGIRGSEGYRVALVMNVESKKIGRKDIVKIEDRVIDEKEASLITLIAPSATINIIRDYVVTEKRHLEVPKQIRGLIKCPNPQCITNNDVEAESRFTTISIKPLKLKCEYCEIYITEEDVIRQIL.

Zn(2+)-binding residues include Cys113, Cys118, Cys142, and Cys145.

Belongs to the PyrI family. Contains catalytic and regulatory chains. It depends on Zn(2+) as a cofactor.

Functionally, involved in allosteric regulation of aspartate carbamoyltransferase. The chain is Aspartate carbamoyltransferase regulatory chain from Saccharolobus islandicus (strain Y.N.15.51 / Yellowstone #2) (Sulfolobus islandicus).